The chain runs to 444 residues: Glutamyl-tRNA reductase (444 aa).

Residues 49–52 (TCNR), S109, 114–116 (ETQ), and Q120 contribute to the substrate site. C50 acts as the Nucleophile in catalysis. Residue 189–194 (GAGKMG) coordinates NADP(+).

It belongs to the glutamyl-tRNA reductase family. In terms of assembly, homodimer.

It catalyses the reaction (S)-4-amino-5-oxopentanoate + tRNA(Glu) + NADP(+) = L-glutamyl-tRNA(Glu) + NADPH + H(+). The protein operates within porphyrin-containing compound metabolism; protoporphyrin-IX biosynthesis; 5-aminolevulinate from L-glutamyl-tRNA(Glu): step 1/2. Catalyzes the NADPH-dependent reduction of glutamyl-tRNA(Glu) to glutamate 1-semialdehyde (GSA). The polypeptide is Glutamyl-tRNA reductase (Bacillus anthracis (strain A0248)).